Consider the following 1501-residue polypeptide: Multidrug resistance protein CDR1 (1501 aa).

Residues 1 to 30 (MSDSKMSSQDESKLEKAISQDSSSENHSIN) are disordered. Topologically, residues 1 to 513 (MSDSKMSSQD…NFLRMKGDPS (513 aa)) are cytoplasmic. A compositionally biased stretch (basic and acidic residues) spans 8–18 (SQDESKLEKAI). The region spanning 150 to 404 (LATEGFRHFQ…FEKMGWKCPQ (255 aa)) is the ABC transporter 1 domain. The helical transmembrane segment at 514–534 (IPIFSVFGQLVMGLILSSVFY) threads the bilayer. Asparagine 535 is a glycosylation site (N-linked (GlcNAc...) asparagine). 4 consecutive transmembrane segments (helical) span residues 549 to 569 (AMFFAVLFNAFSSLLEIMSLF), 598 to 618 (LPVKLAMSMSFNFVFYFMVNF), 623 to 643 (GRFFFYWLMCIWCTFVMSHLF), and 655 to 675 (GAMTPATVLLLAMVIYTGFVI). Asparagine 724 carries N-linked (GlcNAc...) asparagine glycosylation. Residues 765 to 785 (LGITIGFAVFFLAIYIALTEF) form a helical membrane-spanning segment. The Cytoplasmic portion of the chain corresponds to 786–1195 (NKGAMQKGEI…TIVQDWRSPG (410 aa)). The ABC transporter 2 domain occupies 859-1103 (FFWRDLTYQV…MINYFEKYGA (245 aa)). 895–902 (GASGAGKT) contributes to the ATP binding site. The next 6 membrane-spanning stretches (helical) occupy residues 1196-1216 (YIYSKIFLVVSAALFNGFSFF), 1230-1250 (FSVFMFFIPFNTLVQQMLPYF), 1281-1301 (IPYQVAVGTIAFFCWYYPLGL), 1315-1335 (GVLMWMLVTAFYVYTATMGQL), 1356-1376 (MCLNFCGVLAGPDVLPGFWIF), and 1467-1487 (FGIFIAFIAINIILTVIFYWL).

Belongs to the ABC transporter superfamily. ABCG family. PDR (TC 3.A.1.205) subfamily.

The protein localises to the membrane. In terms of biological role, transporter, whose physiological function is not yet established. Confers resistance to the chemical cycloheximide. This is Multidrug resistance protein CDR1 (CDR1) from Candida albicans (Yeast).